Consider the following 73-residue polypeptide: Large ribosomal subunit protein bL31 (73 aa).

This sequence belongs to the bacterial ribosomal protein bL31 family. Type A subfamily. Part of the 50S ribosomal subunit.

Its function is as follows. Binds the 23S rRNA. In Cereibacter sphaeroides (strain ATCC 17025 / ATH 2.4.3) (Rhodobacter sphaeroides), this protein is Large ribosomal subunit protein bL31.